A 105-amino-acid chain; its full sequence is Small ribosomal subunit protein uS10 (105 aa).

The protein belongs to the universal ribosomal protein uS10 family. As to quaternary structure, part of the 30S ribosomal subunit.

Involved in the binding of tRNA to the ribosomes. This is Small ribosomal subunit protein uS10 from Rickettsia peacockii (strain Rustic).